The sequence spans 354 residues: MGAPATAASGGGDDDDRDVVFEYLLCTEEDAASAGSFFQQLQGPAPAVSSSPSTTTATAPAAAGSCDDGGEEEEEEVWTVDVVAELIGGEAERSHSPRADYPGRLRSGRPADLAARADSVAWILKVRELYGMLPVTAYLAVSYMDRFLSLHRLPGNGWAMQLLAVTCLSLAAKMEETLVPSILDLQMEDARYIFEHRTIFRMELLVLDALDWRLRSITPFTFMYLFADKVDPNGKHIRELIHQATQVTLATIHDTEFLDHCPSSIAAAAVLCASSEIMQLVSIDHGTLVSWRIIGLDEEAIIRCYRLMQQLISSNNVGRESTEITMATTTTTATTAVSSEEVVSSSPPSKRRKM.

Disordered regions lie at residues 37–74 and 331–354; these read FFQQ…EEEE and TTAT…RRKM. Low complexity-rich tracts occupy residues 44–66 and 331–346; these read PAPA…AGSC and TTAT…VSSS.

Belongs to the cyclin family. Cyclin D subfamily.

In Oryza sativa subsp. japonica (Rice), this protein is Cyclin-D1-2 (CYCD1-2).